Reading from the N-terminus, the 887-residue chain is MPVRKKHGPYDIIADDVYDCRIPLHNELAYQHGIHFEAKYVGSMEIPRPGTRIEIVAAMRRVRYEFKARGIKKRPVDITVSVDGVKVVLQRKKQKEKGLSWDESKLLVMFHPIYRIFYVSHDSQDLQIFSYIARDGASNTFKCNVFKCSKKSQAMRVVRTIGQAFEVCHKVAQDQMQEKHEDEAAKSKISMQSEDEAGPNALDVIEERGGREEDSRSSSPMEAPPVGGPLYGKRLSLFQPRKPSTTSSSGGTAIDTTAIPENVLEIPNTSHPILQPKAPELVPQLQPQTALPYQQKPQSLLNIQQQQFNTLPSQMPSTQTLPSLSENPGQSHIPRMMTMPPNMPYPTATLPHPRTWAPQIPSYPNSMQSLEQNVPMYYPQMPGMLPSSSSLPFGLSSPVMVSPYATLQLNMQSQQLDQPDHSGSQITMDQYNQQLMRSQLDQAQQSVQVAGCQVQLLRDQLTSETTARLEAQSRTHQLLSANRDLLEQVQNLVSRLQMLETKITSEIHHSSSQPPQHQPIYQPSTSTPLNPKMPLSIDHNDPRIPGNSSIRLNYPYQVQPLADLRAGSLPPVKESKERRKDEGTRTEPESNAEDTTDYSSSDQYERTSNVMKPSHFNILMSNPLVDINVPSGAAMSSRMEQFDMGDTPGTSSTPPKKEKKPSSGILRGENFSRMSFNPKLGREKEREQQQLMFEDTLEDDSPRSIPPSPPSKARNTTIDSLFKPQDDPPTIADREPQQLPPQPSQQNQKKNTAVNLLMPTMPASSSLVTAMYPPMRQPAVPVNKIQPKVDVFRKKTLKTLSMDIAEEPEPSEMDPNRNNLPSSTNSSMKRRGFLPPPNTDVEIKEIEDYINRNVDRSKLPETSLLTRLTRQAQGDNSLGNLPNGYPQ.

Residues 30–197 (YQHGIHFEAK…KISMQSEDEA (168 aa)) enclose the PID domain. Basic and acidic residues-rich tracts occupy residues 176-186 (MQEKHEDEAAK) and 205-216 (IEERGGREEDSR). Disordered stretches follow at residues 176–254 (MQEK…GTAI), 506–606 (EIHH…QYER), 641–753 (QFDM…KNTA), 804–839 (IAEEPEPSEMDPNRNNLPSSTNSSMKRRGFLPPPNT), and 853–887 (NVDRSKLPETSLLTRLTRQAQGDNSLGNLPNGYPQ). Over residues 242–254 (KPSTTSSSGGTAI) the composition is skewed to polar residues. The stretch at 434–506 (QLMRSQLDQA…QMLETKITSE (73 aa)) forms a coiled coil. Residues 510–519 (SSSQPPQHQP) show a composition bias toward low complexity. Positions 573–588 (KESKERRKDEGTRTEP) are enriched in basic and acidic residues. The segment covering 597–606 (DYSSSDQYER) has biased composition (polar residues). 2 stretches are compositionally biased toward polar residues: residues 816 to 827 (NRNNLPSSTNSS) and 863 to 887 (SLLTRLTRQAQGDNSLGNLPNGYPQ).

Component of the dystrophin glycoprotein complex (DGC). Interacts with zyx-1. In terms of tissue distribution, expressed in muscles of the head, body wall and vulva. In some animals, weaker expression is observed in the intestinal muscles (at protein level). Isoform a is expressed in lateral neurons SDQL and SDQR.

Functionally, together with dys-1 and hlh-1, participates in a common muscular function. This is Dystrophin-like protein 1 from Caenorhabditis elegans.